The sequence spans 422 residues: Metallocarboxypeptidase A (422 aa).

The signal sequence occupies residues 1–17 (MRSVLSLALLAANVVTA). Positions 18-112 (AVVSPFDYSG…FEAYSAGYAP (95 aa)) are cleaved as a propeptide — activation peptide. Residues 119 to 419 (SYHSYQDHLS…AGTVAMLKAV (301 aa)) form the Peptidase M14 domain. 2 residues coordinate Zn(2+): His179 and Glu182. Substrate is bound by residues 179–182 (HARE), Arg237, and 254–255 (NR). A disulfide bridge connects residues Cys248 and Cys271. His309 contacts Zn(2+). Residue 310 to 311 (SY) participates in substrate binding. Residue Glu385 is the Proton donor/acceptor of the active site.

The protein belongs to the peptidase M14 family. Zn(2+) is required as a cofactor.

It localises to the secreted. Its function is as follows. Extracellular metalloprotease that contributes to pathogenicity. The sequence is that of Metallocarboxypeptidase A (MCPA) from Trichophyton rubrum (Athlete's foot fungus).